The chain runs to 244 residues: tRNA (guanine-N(7)-)-methyltransferase (244 aa).

The disordered stretch occupies residues 1 to 24 (MTDSHVPHPESPAVEEGEERPHRR). The S-adenosyl-L-methionine site is built by Glu-74, Glu-99, Asp-126, and Asp-149. Residue Asp-149 is part of the active site. Substrate is bound by residues Lys-153, Asp-185, and 222-225 (TKFE).

This sequence belongs to the class I-like SAM-binding methyltransferase superfamily. TrmB family.

The enzyme catalyses guanosine(46) in tRNA + S-adenosyl-L-methionine = N(7)-methylguanosine(46) in tRNA + S-adenosyl-L-homocysteine. It participates in tRNA modification; N(7)-methylguanine-tRNA biosynthesis. Catalyzes the formation of N(7)-methylguanine at position 46 (m7G46) in tRNA. The chain is tRNA (guanine-N(7)-)-methyltransferase from Pseudomonas syringae pv. syringae (strain B728a).